The chain runs to 117 residues: Biofilm growth-associated repressor (117 aa).

Residues 20–114 form the HTH arsR-type domain; it reads AMEKRATEVA…ALYAIFCAPE (95 aa). The H-T-H motif DNA-binding region spans 54 to 77; sequence VGELEAKLDIRQPTLSQQLGVLRE.

Its function is as follows. Represses an operon that comprises at least itself and blh. Binds to a palindromic AT-rich sequence spanning the -10 region of the blh promoter and blocks transcription of the operon. The chain is Biofilm growth-associated repressor (bigR) from Agrobacterium fabrum (strain C58 / ATCC 33970) (Agrobacterium tumefaciens (strain C58)).